Consider the following 763-residue polypeptide: Protein translocase subunit SecA 2 (763 aa).

ATP-binding positions include Gln-83, 101–105, and Asp-490; that span reads GEGKT.

Belongs to the SecA family. In terms of assembly, monomer and homodimer. Part of the essential Sec protein translocation apparatus which comprises SecA, SecYEG and auxiliary proteins SecDF. Other proteins may also be involved.

The protein resides in the cell membrane. It localises to the cytoplasm. The catalysed reaction is ATP + H2O + cellular proteinSide 1 = ADP + phosphate + cellular proteinSide 2.. Part of the Sec protein translocase complex. Interacts with the SecYEG preprotein conducting channel. Has a central role in coupling the hydrolysis of ATP to the transfer of proteins into and across the cell membrane, serving as an ATP-driven molecular motor driving the stepwise translocation of polypeptide chains across the membrane. This Corynebacterium glutamicum (strain R) protein is Protein translocase subunit SecA 2.